The chain runs to 272 residues: Ribonuclease HII (272 aa).

One can recognise an RNase H type-2 domain in the interval 87–272 (KYVAGVDEVG…HRMSFLKNIL (186 aa)). Asp93, Glu94, and Asp188 together coordinate a divalent metal cation.

It belongs to the RNase HII family. It depends on Mn(2+) as a cofactor. Requires Mg(2+) as cofactor.

Its subcellular location is the cytoplasm. It carries out the reaction Endonucleolytic cleavage to 5'-phosphomonoester.. In terms of biological role, endonuclease that specifically degrades the RNA of RNA-DNA hybrids. The sequence is that of Ribonuclease HII from Clostridium perfringens (strain ATCC 13124 / DSM 756 / JCM 1290 / NCIMB 6125 / NCTC 8237 / Type A).